Reading from the N-terminus, the 474-residue chain is GTPase Der (474 aa).

2 consecutive EngA-type G domains span residues 3–167 and 204–379; these read LTIA…GSER and IRIA…RVWN. GTP contacts are provided by residues 9–16, 56–60, 119–122, 210–217, 257–261, and 322–325; these read GRPNVGKS, DTAGL, NKSE, GRPNTGKS, and NKWD. Residues 380 to 464 enclose the KH-like domain; the sequence is RRISTAKLNQ…PVRLSLRASD (85 aa).

The protein belongs to the TRAFAC class TrmE-Era-EngA-EngB-Septin-like GTPase superfamily. EngA (Der) GTPase family. Associates with the 50S ribosomal subunit.

Its function is as follows. GTPase that plays an essential role in the late steps of ribosome biogenesis. This chain is GTPase Der, found in Bartonella tribocorum (strain CIP 105476 / IBS 506).